Consider the following 117-residue polypeptide: Large ribosomal subunit protein eL18 (117 aa).

The protein belongs to the eukaryotic ribosomal protein eL18 family.

This Archaeoglobus fulgidus (strain ATCC 49558 / DSM 4304 / JCM 9628 / NBRC 100126 / VC-16) protein is Large ribosomal subunit protein eL18.